The primary structure comprises 131 residues: Single-stranded DNA-binding protein 2 (131 aa).

Residues 1–103 (MYNKVIMIGR…VLASSFQLLE (103 aa)) form the SSB domain. The Important for interaction with partner proteins motif lies at 126–131 (EEELPF).

Homotetramer.

Its function is as follows. Plays an important role in DNA replication, recombination and repair. Binds to ssDNA and to an array of partner proteins to recruit them to their sites of action during DNA metabolism. The polypeptide is Single-stranded DNA-binding protein 2 (ssb2) (Streptococcus agalactiae serotype V (strain ATCC BAA-611 / 2603 V/R)).